A 240-amino-acid polypeptide reads, in one-letter code: MSLGIKEHPDAEVQKNRVLTLDDWQDKWVTRHIAFHQEQGHQLLKKHFDTFLKGQSGLRVFFPLCGKAIEMKWFADRGHTVVGVEISEIGIREFFAEQNLSYTEEPLTEIAGAKVFKSSSGNISLYCCSIFDLPRANIGKFDRIWDRGALVAVNPGDRDRYADIILSLLRKGYHYLLVVLSYDPTKHTGPPFYVPDAELKKLFGTKCNMQCLEEVDALEERHKTWGVDYFFEKLYLLTEK.

24–35 provides a ligand contact to S-adenosyl-L-methionine; that stretch reads WQDKWVTRHIAF. Phe35 contributes to the substrate binding site. At Lys53 the chain carries N6-acetyllysine. S-adenosyl-L-methionine-binding positions include Leu64, Glu85, 129–130, and Arg147; that span reads SI.

Belongs to the class I-like SAM-binding methyltransferase superfamily. TPMT family. As to quaternary structure, monomer.

It localises to the cytoplasm. It catalyses the reaction S-adenosyl-L-methionine + a thiopurine = S-adenosyl-L-homocysteine + a thiopurine S-methylether.. It carries out the reaction mercaptopurine + S-adenosyl-L-methionine = 6-methylthiopurine + S-adenosyl-L-homocysteine + H(+). Catalyzes the S-methylation of thiopurine drugs such as 6-mercaptopurine (also called mercaptopurine, 6-MP or its brand name Purinethol) using S-adenosyl-L-methionine as the methyl donor. TPMT activity modulates the cytotoxic effects of thiopurine prodrugs. A natural substrate for this enzyme has yet to be identified. In Rattus norvegicus (Rat), this protein is Thiopurine S-methyltransferase (Tpmt).